A 110-amino-acid chain; its full sequence is MSKAIIKFVRLSPTKARLIAREVQGMNAELALASLQFMPNRGAKFIANAISSAVANGGFEPEEVVVTSCRVDAGPVLKRFRPRARGTASKIRKPTSHVMVEVSKPEKKEA.

Over residues 84-95 (ARGTASKIRKPT) the composition is skewed to basic residues. The segment at 84 to 110 (ARGTASKIRKPTSHVMVEVSKPEKKEA) is disordered.

Belongs to the universal ribosomal protein uL22 family. Part of the 50S ribosomal subunit.

This protein binds specifically to 23S rRNA; its binding is stimulated by other ribosomal proteins, e.g. L4, L17, and L20. It is important during the early stages of 50S assembly. It makes multiple contacts with different domains of the 23S rRNA in the assembled 50S subunit and ribosome. Its function is as follows. The globular domain of the protein is located near the polypeptide exit tunnel on the outside of the subunit, while an extended beta-hairpin is found that lines the wall of the exit tunnel in the center of the 70S ribosome. The protein is Large ribosomal subunit protein uL22 of Campylobacter concisus (strain 13826).